The chain runs to 378 residues: DGISLEDLLEKRTGNMMQPQLAEKIAKATRKEFVDGIAAHGTDALRFTLAALASNGRDINWDMKRLEGYRNFCNKLWNASRFVLTNDKLDLSQGEIEFSVADRWIQSEFNRTVESFRSALSQYRFDLCANAIYEFTWNQFCDWYLELTKPVFANGNAAQIRAASQTLVHVLEKLLRLAHPLIPFITEEIWQKVKGFVGITADSIMLQPFPQVEENGFDPEAEAEIEWLKEVIVAVRNIRAESNIAPSKGLDLLFRNLSAENAKILEKQTALLKAMAKLDNVQVLAANETHASVAKLVGNAELLVPMAGFINKEAELARLTKEIEKYQNEVKRIENKLSNEAFVAKAPKAVITKEREKQAEYQSGLEKIQEQYKAIEAL.

The stretch at 307–377 forms a coiled coil; sequence AGFINKEAEL…IQEQYKAIEA (71 aa).

The protein belongs to the class-I aminoacyl-tRNA synthetase family. ValS type 1 subfamily. Monomer.

It localises to the cytoplasm. It catalyses the reaction tRNA(Val) + L-valine + ATP = L-valyl-tRNA(Val) + AMP + diphosphate. Catalyzes the attachment of valine to tRNA(Val). As ValRS can inadvertently accommodate and process structurally similar amino acids such as threonine, to avoid such errors, it has a 'posttransfer' editing activity that hydrolyzes mischarged Thr-tRNA(Val) in a tRNA-dependent manner. This is Valine--tRNA ligase (valS) from Haemophilus parainfluenzae.